A 156-amino-acid polypeptide reads, in one-letter code: Small ribosomal subunit protein uS7 (156 aa).

It belongs to the universal ribosomal protein uS7 family. In terms of assembly, part of the 30S ribosomal subunit. Contacts proteins S9 and S11.

In terms of biological role, one of the primary rRNA binding proteins, it binds directly to 16S rRNA where it nucleates assembly of the head domain of the 30S subunit. Is located at the subunit interface close to the decoding center, probably blocks exit of the E-site tRNA. The sequence is that of Small ribosomal subunit protein uS7 from Pelotomaculum thermopropionicum (strain DSM 13744 / JCM 10971 / SI).